We begin with the raw amino-acid sequence, 118 residues long: uncharacterized protein (118 aa).

3 helical membrane passes run 17-37 (IIII…FAIL), 60-80 (INYT…IMIF), and 90-110 (YIEQ…GSFW).

Its subcellular location is the membrane. This is an uncharacterized protein from Acanthamoeba polyphaga mimivirus (APMV).